The sequence spans 593 residues: Prospero homeobox protein 2 (593 aa).

6 disordered regions span residues 24–48 (CMDQ…QLPS), 79–130 (SPSS…GGTR), 153–199 (TEPR…KDLC), 260–284 (QERS…SAYK), 298–333 (PQAG…QSPL), and 356–388 (GRGP…PWGL). Basic and acidic residues predominate over residues 87-99 (RARESLRCPEKGR). The segment covering 167–181 (PRSSPRARPRNSCSS) has biased composition (low complexity). A compositionally biased stretch (polar residues) spans 363–380 (WSGSPPQDAAFQSHTSPE). One can recognise a Prospero-type homeo domain in the interval 433–491 (QEGLSPGHLKKAKLMFFFTRYPSSSLLKAYFPDVQFNRCITSQMIKWFSNFREFYYIQM). A homeo-Prospero region spans residues 433 to 591 (QEGLSPGHLK…KSPSFLPGLF (159 aa)). One can recognise a Prospero domain in the interval 492–591 (EKYARQALSD…KSPSFLPGLF (100 aa)).

The protein belongs to the Prospero homeodomain family. In terms of tissue distribution, expressed in testis.

It localises to the nucleus. Functionally, transcription regulator. Does not seem to be essential for embryonic development and postnatal survival. This Mus musculus (Mouse) protein is Prospero homeobox protein 2 (Prox2).